We begin with the raw amino-acid sequence, 306 residues long: ADP-polyphosphate phosphotransferase 2 (306 aa).

Belongs to the polyphosphate kinase 2 (PPK2) family. Class I subfamily.

It carries out the reaction [phosphate](n) + ATP = [phosphate](n+1) + ADP. The catalysed reaction is [phosphate](n) + GTP = [phosphate](n+1) + GDP. Its function is as follows. Uses inorganic polyphosphate (polyP) as a donor to convert ADP to ATP. Can also convert GDP to GTP, with lower efficiency. This Rhizobium meliloti (strain 1021) (Ensifer meliloti) protein is ADP-polyphosphate phosphotransferase 2.